The following is a 153-amino-acid chain: Histone H2A.Z-specific chaperone CHZ1 (153 aa).

Residues 1–29 (MSDEAKEKRELESQKESSHNKSEKSVEPK) show a composition bias toward basic and acidic residues. Residues 1-153 (MSDEAKEKRE…EDEEDDDFKE (153 aa)) form a disordered region. Ser2 is modified (N-acetylserine). Positions 56 to 65 (LTKSENNGTV) are enriched in polar residues. 2 positions are modified to phosphoserine: Ser68 and Ser70. Acidic residues predominate over residues 84–94 (EGEEEEDDLAE). Positions 87 to 108 (EEEDDLAEIDTSNIITSGRRTR) are important for H2A.Z-H2B binding. The span at 110-138 (KVIDYKKTAEELDKKEPSTGSKDDVGYGE) shows a compositional bias: basic and acidic residues. Acidic residues predominate over residues 139 to 153 (KEEDDEDEEDDDFKE).

It belongs to the CHZ1 family. Forms a heterotrimer with H2A.Z-H2B, stabilizing the association of the histone dimer. Also, with a lower affinity, forms a heterotrimer with H2A-H2B.

The protein localises to the nucleus. Forms a chaperone-bound H2A.Z-H2B complex that acts as a source for SWR1 complex-dependent H2A to H2A.Z histone replacement in chromatin. This chain is Histone H2A.Z-specific chaperone CHZ1 (CHZ1), found in Saccharomyces cerevisiae (strain ATCC 204508 / S288c) (Baker's yeast).